A 334-amino-acid chain; its full sequence is Aspartate carbamoyltransferase catalytic subunit (334 aa).

Arg-71 and Thr-72 together coordinate carbamoyl phosphate. An L-aspartate-binding site is contributed by Lys-99. Carbamoyl phosphate contacts are provided by Arg-121, His-151, and Gln-154. The L-aspartate site is built by Arg-184 and Arg-239. Positions 280 and 281 each coordinate carbamoyl phosphate.

It belongs to the aspartate/ornithine carbamoyltransferase superfamily. ATCase family. As to quaternary structure, heterododecamer (2C3:3R2) of six catalytic PyrB chains organized as two trimers (C3), and six regulatory PyrI chains organized as three dimers (R2).

The catalysed reaction is carbamoyl phosphate + L-aspartate = N-carbamoyl-L-aspartate + phosphate + H(+). Its pathway is pyrimidine metabolism; UMP biosynthesis via de novo pathway; (S)-dihydroorotate from bicarbonate: step 2/3. Its function is as follows. Catalyzes the condensation of carbamoyl phosphate and aspartate to form carbamoyl aspartate and inorganic phosphate, the committed step in the de novo pyrimidine nucleotide biosynthesis pathway. This is Aspartate carbamoyltransferase catalytic subunit from Pseudomonas savastanoi pv. phaseolicola (strain 1448A / Race 6) (Pseudomonas syringae pv. phaseolicola (strain 1448A / Race 6)).